The following is a 172-amino-acid chain: NAD(P)H-quinone oxidoreductase subunit I, chloroplastic (172 aa).

4Fe-4S ferredoxin-type domains lie at 55–84 and 95–124; these read GRIH…VDWK and LNYS…MTEE. Residues C64, C67, C70, C74, C104, C107, C110, and C114 each contribute to the [4Fe-4S] cluster site.

The protein belongs to the complex I 23 kDa subunit family. In terms of assembly, NDH is composed of at least 16 different subunits, 5 of which are encoded in the nucleus. [4Fe-4S] cluster serves as cofactor.

It localises to the plastid. Its subcellular location is the chloroplast thylakoid membrane. The enzyme catalyses a plastoquinone + NADH + (n+1) H(+)(in) = a plastoquinol + NAD(+) + n H(+)(out). It catalyses the reaction a plastoquinone + NADPH + (n+1) H(+)(in) = a plastoquinol + NADP(+) + n H(+)(out). NDH shuttles electrons from NAD(P)H:plastoquinone, via FMN and iron-sulfur (Fe-S) centers, to quinones in the photosynthetic chain and possibly in a chloroplast respiratory chain. The immediate electron acceptor for the enzyme in this species is believed to be plastoquinone. Couples the redox reaction to proton translocation, and thus conserves the redox energy in a proton gradient. This Crucihimalaya wallichii (Rock-cress) protein is NAD(P)H-quinone oxidoreductase subunit I, chloroplastic.